The chain runs to 321 residues: High osmolarity signaling protein SHO1A (321 aa).

Topologically, residues 1–28 (MDYNNNRYGGGGGGSKFNLGHIVGDPFS) are cytoplasmic. The helical transmembrane segment at 29 to 49 (LATIAIATAGWLIAFVSSIIA) threads the bilayer. At 50 to 58 (NIDQEYPNY) the chain is on the extracellular side. N57 carries an N-linked (GlcNAc...) asparagine glycan. Residues 59 to 79 (SWWALAYMFFVILGVTFAVAA) form a helical membrane-spanning segment. N80 is a topological domain (cytoplasmic). Residues 81 to 101 (AVYTYHVAMVGFLAAGLVFTT) traverse the membrane as a helical segment. At 102–116 (SSVNSLIYWSDKAKQ) the chain is on the extracellular side. Residues 117–137 (AAAAGFILLSMVSIVWIFYFG) form a helical membrane-spanning segment. Over 138–321 (SQPTASHRQT…IAPSNYLILL (184 aa)) the chain is Cytoplasmic. Disordered regions lie at residues 155 to 181 (KDHA…AQHP) and 194 to 261 (TSSP…QQPT). 2 stretches are compositionally biased toward polar residues: residues 165 to 181 (HMTQ…AQHP) and 225 to 237 (NFSN…PITS). Positions 238-249 (QNNPQNQHQQPQ) are enriched in low complexity. Positions 250 to 261 (DLTSPSTTQQPT) are enriched in polar residues. The SH3 domain occupies 262–321 (EYPYRAKAIYSYEANPDDANEISFNKHEILEVSDVSGRWWQAKKENGETGIAPSNYLILL).

It belongs to the SHO1 family. As to quaternary structure, forms homooligomers.

The protein resides in the cell membrane. Functionally, plasma membrane osmosensor that activates the high osmolarity glycerol (HOG) MAPK signaling pathway in response to high osmolarity. This is High osmolarity signaling protein SHO1A (SHO1A) from Hortaea werneckii.